The primary structure comprises 333 residues: Glycerol-3-phosphate dehydrogenase [NAD(P)+] (333 aa).

The NADPH site is built by Ser10, Trp11, His31, Arg32, and Lys105. Sn-glycerol 3-phosphate contacts are provided by Lys105, Gly136, and Ser138. Ala140 contacts NADPH. Lys191, Asp244, Ser254, Arg255, and Asn256 together coordinate sn-glycerol 3-phosphate. Lys191 functions as the Proton acceptor in the catalytic mechanism. Arg255 lines the NADPH pocket. NADPH contacts are provided by Ile279 and Glu281.

It belongs to the NAD-dependent glycerol-3-phosphate dehydrogenase family.

The protein resides in the cytoplasm. It carries out the reaction sn-glycerol 3-phosphate + NAD(+) = dihydroxyacetone phosphate + NADH + H(+). It catalyses the reaction sn-glycerol 3-phosphate + NADP(+) = dihydroxyacetone phosphate + NADPH + H(+). It functions in the pathway membrane lipid metabolism; glycerophospholipid metabolism. Its function is as follows. Catalyzes the reduction of the glycolytic intermediate dihydroxyacetone phosphate (DHAP) to sn-glycerol 3-phosphate (G3P), the key precursor for phospholipid synthesis. The chain is Glycerol-3-phosphate dehydrogenase [NAD(P)+] from Chlorobium luteolum (strain DSM 273 / BCRC 81028 / 2530) (Pelodictyon luteolum).